Consider the following 483-residue polypeptide: Auxin transporter-like protein 2 (483 aa).

Residues 1–53 (MENGEKAAETVVVGNYVEMEKDGKALDIKSKLSDMFWHGGSAYDAWFSCASNQ) are Cytoplasmic-facing. The helical transmembrane segment at 54-71 (VAQVLLTLPYSFSQLGML) threads the bilayer. Topologically, residues 72–73 (SG) are extracellular. A helical transmembrane segment spans residues 74–94 (ILFQLFYGILGSWTAYLISIL). Residues 95-130 (YVEYRTRKEREKVNFRNHVIQWFEVLDGLLGKHWRN) are Cytoplasmic-facing. A helical membrane pass occupies residues 131-151 (VGLAFNCTFLLFGSVIQLIAC). Topologically, residues 152-166 (ASNIYYINDNLDKRT) are extracellular. Residues 167–187 (WTYIFGACCATTVFIPSFHNY) traverse the membrane as a helical segment. At 188–190 (RIW) the chain is on the cytoplasmic side. A helical transmembrane segment spans residues 191 to 211 (SFLGLLMTTYTAWYLTIASIL). The Extracellular segment spans residues 212–226 (HGQVEGVKHSGPSKL). The chain crosses the membrane as a helical span at residues 227–247 (VLYFTGATNILYTFGGHAVTV). The Cytoplasmic portion of the chain corresponds to 248–261 (EIMHAMWKPQKFKS). Residues 262-282 (IYLFATLYVLTLTLPSASAVY) traverse the membrane as a helical segment. The Extracellular segment spans residues 283 to 306 (WAFGDLLLNHSNAFALLPKNLYRD). N-linked (GlcNAc...) asparagine glycosylation is present at Asn-291. The chain crosses the membrane as a helical span at residues 307 to 327 (FAVVLMLIHQFITFGFACTPL). Topologically, residues 328–350 (YFVWEKLIGMHECRSMCKRAAAR) are cytoplasmic. A helical transmembrane segment spans residues 351 to 371 (LPVVIPIWFLAIIFPFFGPIN). Topologically, residues 372 to 374 (STV) are extracellular. Residues 375 to 395 (GSLLVSFTVYIIPALAHIFTF) traverse the membrane as a helical segment. Residues 396 to 422 (RSSAARENAVEQPPRFLGRWTGAFTIN) lie on the Cytoplasmic side of the membrane. The chain crosses the membrane as a helical span at residues 423–443 (AFIVVWVFIVGFGFGGWASMI). Over 444 to 483 (NFVHQIDTFGLFTKCYQCPPPVMVSPPPISHPHFNHTHGL) the chain is Extracellular. N-linked (GlcNAc...) asparagine glycosylation is present at Asn-478.

It belongs to the amino acid/polyamine transporter 2 family. Amino acid/auxin permease (AAAP) (TC 2.A.18.1) subfamily.

It is found in the cell membrane. Carrier protein involved in proton-driven auxin influx. Mediates the formation of auxin gradient from developing leaves (site of auxin biosynthesis) to tips by contributing to the loading of auxin in vascular tissues and facilitating acropetal (base to tip) auxin transport within inner tissues of the root apex, and basipetal (tip to base) auxin transport within outer tissues of the root apex. The sequence is that of Auxin transporter-like protein 2 (LAX2) from Arabidopsis thaliana (Mouse-ear cress).